Here is a 551-residue protein sequence, read N- to C-terminus: MTSAVPYDPYDDLDNNPFAEPQEEDSEPAATTTDGSSSMSEERVGTEQTAASVQDNGTANNIQNGLGEEGNATRSKTSNEHNENQQPSQPSERVILPERSDEKKKYTLLAKVTGLERFGSATGKKENPTIIFDCSTNLPTFRKQQYKNVKKSYEEFHQLFKYLNVAIQESFVPTLPSAYTTFGINSEEDRMKVTRNFQLWFNRLSQDPLIIRNEEVAFFIESDFNTYTPINKSKSLASGLKRKTLKQLAPPYDEITELAEFRPLVKSIYVVSQSLQEKLLRVSRNRKMMVQEENAFGQDFVNLDEHNKLYRRYGKILTAVGDIDSIIATMDMATLYDGLEWIVRDAYAVKEALTNRHFIMRNLVQAQQNSKAKQEQARRFRSRRDINPMKIDEALRQLKAAAKNEQVLTLKLQRITSNMIIERKQWISWYEEWIRSSIKEFTLRKIEYERKKLTLLERVRSDIRKADENGGLSRLGRHAVSNNNSDTSQTLKGDSWTGESNRKSQIPINKIAHTEFDDELFTEDDGYNSQDSDTTSLNARHAASLLGMSTK.

Positions 1–100 (MTSAVPYDPY…SERVILPERS (100 aa)) are disordered. 2 stretches are compositionally biased toward polar residues: residues 29–39 (AATTTDGSSSM) and 46–64 (TEQTAASVQDNGTANNIQN). The 120-residue stretch at 108-227 (LLAKVTGLER…FFIESDFNTY (120 aa)) folds into the PX domain. Residues 359–385 (IMRNLVQAQQNSKAKQEQARRFRSRRD) adopt a coiled-coil conformation. Residues 474 to 504 (RLGRHAVSNNNSDTSQTLKGDSWTGESNRKS) are disordered. Residues 480–504 (VSNNNSDTSQTLKGDSWTGESNRKS) show a composition bias toward polar residues. The residue at position 544 (S544) is a Phosphoserine.

Belongs to the VPS17 family. Component of the retromer complex which consists of VPS29, VPS26, VPS35, VPS5 and VPS17. Component of a retromer subcomplex consisting of VPS5 and VPS17. Phosphorylated on one or more serine residues.

It is found in the endomembrane system. In terms of biological role, component of the membrane-associated retromer complex which is essential in endosome-to-Golgi retrograde transport. The VPS5-VPS17 subcomplex may assemble onto the membrane to promote vesicle formation and is required for recycling the vacuolar protein-sorting receptor. Required for the sorting and delivery of a subset of soluble vacuolar hydrolases. Required for retention of late Golgi membrane proteins and vacuolar biogenesis. Involved in vacuolar fragmentation during hyperosmotic stress. The polypeptide is Vacuolar protein sorting-associated protein 17 (Saccharomyces cerevisiae (strain ATCC 204508 / S288c) (Baker's yeast)).